A 453-amino-acid polypeptide reads, in one-letter code: Protein ECM18 (453 aa).

In terms of domain architecture, AB hydrolase-1 spans 130-435; it reads LLIHGYAASS…SGHNLFLDNP (306 aa). Residues 428-433 carry the HXXXXD motif motif; the sequence is HNLFLD.

This sequence belongs to the peptidase S33 family. ABHD4/ABHD5 subfamily.

The protein resides in the mitochondrion. Its function is as follows. May be involved in cell wall organization and biogenesis. The protein is Protein ECM18 (ECM18) of Saccharomyces cerevisiae (strain ATCC 204508 / S288c) (Baker's yeast).